A 121-amino-acid chain; its full sequence is Large ribosomal subunit protein P2 (121 aa).

The segment covering 72 to 99 (VAVPSGGAPAAATAAAEAPKGGDKAAAP) has biased composition (low complexity). Positions 72–121 (VAVPSGGAPAAATAAAEAPKGGDKAAAPPKEEKKEESEESDADMGFSPFD) are disordered.

Belongs to the eukaryotic ribosomal protein P1/P2 family. As to quaternary structure, P1 and P2 exist as dimers at the large ribosomal subunit. Phosphorylated.

Its function is as follows. Plays an important role in the elongation step of protein synthesis. The protein is Large ribosomal subunit protein P2 of Taenia solium (Pork tapeworm).